Consider the following 229-residue polypeptide: uncharacterized protein (229 aa).

This is an uncharacterized protein from Ureaplasma parvum serovar 3 (strain ATCC 700970).